Here is a 360-residue protein sequence, read N- to C-terminus: Aminomethyltransferase (360 aa).

It belongs to the GcvT family. As to quaternary structure, the glycine cleavage system is composed of four proteins: P, T, L and H.

The catalysed reaction is N(6)-[(R)-S(8)-aminomethyldihydrolipoyl]-L-lysyl-[protein] + (6S)-5,6,7,8-tetrahydrofolate = N(6)-[(R)-dihydrolipoyl]-L-lysyl-[protein] + (6R)-5,10-methylene-5,6,7,8-tetrahydrofolate + NH4(+). In terms of biological role, the glycine cleavage system catalyzes the degradation of glycine. This Bdellovibrio bacteriovorus (strain ATCC 15356 / DSM 50701 / NCIMB 9529 / HD100) protein is Aminomethyltransferase.